We begin with the raw amino-acid sequence, 849 residues long: A-kinase anchor protein 4 (849 aa).

Residues 1–188 constitute a propeptide that is removed on maturation; sequence MIAYCGTTTM…MAASKNTNNN (188 aa). Phosphoserine occurs at positions 96, 130, 190, and 204. Residues 183–205 show a composition bias toward polar residues; that stretch reads KNTNNNQSPSNPATKSPSNQRSV. The interval 183–210 is disordered; the sequence is KNTNNNQSPSNPATKSPSNQRSVATPEG. Position 207 is a phosphothreonine (Thr-207). Residues Ser-213, Ser-226, and Ser-271 each carry the phosphoserine modification. A PKA-RI and PKA-RII subunit binding domain region spans residues 219–232; the sequence is FYVNRLSSLVIQMA. Tyr-301 carries the phosphotyrosine modification. Ser-302, Ser-341, Ser-431, Ser-442, Ser-444, Ser-463, Ser-492, Ser-497, and Ser-504 each carry phosphoserine. The tract at residues 335-344 is PKA-RI-alpha subunit binding domain; the sequence is YANQVASDMM. Position 506 is a phosphothreonine (Thr-506). Ser-538 is subject to Phosphoserine. Ser-583 carries the phosphoserine; by STK33 modification. Ser-628, Ser-633, Ser-652, and Ser-702 each carry phosphoserine.

This sequence belongs to the AKAP110 family. As to quaternary structure, interacts with PRKAR1A and PRKAR2A. Interacts with ENO4. Interacts with QRICH2. In terms of processing, phosphorylated by STK33 during sperm flagella assembly. As to expression, expressed in the fibrous sheath of spermatozoa (at protein level). Expressed in step 1 to step 6 spermatids, abundance then increases during steps 8 to 12, abundance decreases thereafter.

The protein localises to the cell projection. It localises to the cilium. Its subcellular location is the flagellum. Major structural component of sperm fibrous sheath. Plays a role in sperm motility. The polypeptide is A-kinase anchor protein 4 (Mus musculus (Mouse)).